Consider the following 775-residue polypeptide: Subtilisin-like protease SBT1.2 (775 aa).

Positions 1–20 (MEPKPFFLCIIFLLFCSSSS) are cleaved as a signal peptide. The 85-residue stretch at 27-111 (TYIVQLHPNS…AVRPDHVLQV (85 aa)) folds into the Inhibitor I9 domain. The Peptidase S8 domain occupies 116–618 (SYKFLGLDGF…AGHVNPQKAI (503 aa)). Residues aspartate 146 and histidine 222 each act as charge relay system in the active site. A PA domain is found at 388–470 (GGDKGSEFCL…YTESVLLKAY (83 aa)). Asparagine 472 and asparagine 544 each carry an N-linked (GlcNAc...) asparagine glycan. Catalysis depends on serine 552, which acts as the Charge relay system. An N-linked (GlcNAc...) asparagine glycan is attached at asparagine 652.

This sequence belongs to the peptidase S8 family. In terms of tissue distribution, mostly expressed in leaves and cotyledons (especially in epidermal cells), and, to a lower extent, in floral buds, stems, and siliques. Strongly expressed in stomatal precursor cells (meristemoids and guard mother cells).

The protein resides in the secreted. The protein localises to the extracellular space. It is found in the apoplast. It localises to the cell membrane. In terms of biological role, serine protease involved in the negative regulation of stomatal density and distribution. Not active on EPFL6 (AC Q1PEY6). Positive regulator of water use efficiency (WUE). The protein is Subtilisin-like protease SBT1.2 of Arabidopsis thaliana (Mouse-ear cress).